The sequence spans 157 residues: 2-C-methyl-D-erythritol 2,4-cyclodiphosphate synthase (157 aa).

Aspartate 9 and histidine 11 together coordinate a divalent metal cation. Residues 9 to 11 (DVH) and 35 to 36 (HS) contribute to the 4-CDP-2-C-methyl-D-erythritol 2-phosphate site. Histidine 43 contributes to the a divalent metal cation binding site. Residues 57 to 59 (DIG), 62 to 66 (FPDTD), 101 to 107 (AEKPKMA), 133 to 136 (TTTE), phenylalanine 140, and arginine 143 each bind 4-CDP-2-C-methyl-D-erythritol 2-phosphate.

The protein belongs to the IspF family. As to quaternary structure, homotrimer. A divalent metal cation serves as cofactor.

The enzyme catalyses 4-CDP-2-C-methyl-D-erythritol 2-phosphate = 2-C-methyl-D-erythritol 2,4-cyclic diphosphate + CMP. It participates in isoprenoid biosynthesis; isopentenyl diphosphate biosynthesis via DXP pathway; isopentenyl diphosphate from 1-deoxy-D-xylulose 5-phosphate: step 4/6. In terms of biological role, involved in the biosynthesis of isopentenyl diphosphate (IPP) and dimethylallyl diphosphate (DMAPP), two major building blocks of isoprenoid compounds. Catalyzes the conversion of 4-diphosphocytidyl-2-C-methyl-D-erythritol 2-phosphate (CDP-ME2P) to 2-C-methyl-D-erythritol 2,4-cyclodiphosphate (ME-CPP) with a corresponding release of cytidine 5-monophosphate (CMP). The protein is 2-C-methyl-D-erythritol 2,4-cyclodiphosphate synthase of Listeria monocytogenes serovar 1/2a (strain ATCC BAA-679 / EGD-e).